The sequence spans 277 residues: Large ribosomal subunit protein uL2 (277 aa).

The disordered stretch occupies residues 219-277 (TVRGSVMNPNDHPHGGGEGRSPIGHPSPRTPWGKPALGYKTRKNKKYSDRFIVKRRHDK).

Belongs to the universal ribosomal protein uL2 family. Part of the 50S ribosomal subunit. Forms a bridge to the 30S subunit in the 70S ribosome.

Functionally, one of the primary rRNA binding proteins. Required for association of the 30S and 50S subunits to form the 70S ribosome, for tRNA binding and peptide bond formation. It has been suggested to have peptidyltransferase activity; this is somewhat controversial. Makes several contacts with the 16S rRNA in the 70S ribosome. The polypeptide is Large ribosomal subunit protein uL2 (Clostridium botulinum (strain Okra / Type B1)).